The primary structure comprises 115 residues: NADH-ubiquinone oxidoreductase chain 3 (115 aa).

A run of 3 helical transmembrane segments spans residues 4–24, 55–75, and 87–107; these read LITMTVNSALSFCLISIAFWL, FFLVGITFLLFDLEIALLLPL, and TMMVSFMFVSILALGLAYEWL.

This sequence belongs to the complex I subunit 3 family. As to quaternary structure, core subunit of respiratory chain NADH dehydrogenase (Complex I) which is composed of 45 different subunits. Interacts with TMEM186. Interacts with TMEM242.

It is found in the mitochondrion inner membrane. The catalysed reaction is a ubiquinone + NADH + 5 H(+)(in) = a ubiquinol + NAD(+) + 4 H(+)(out). Functionally, core subunit of the mitochondrial membrane respiratory chain NADH dehydrogenase (Complex I) which catalyzes electron transfer from NADH through the respiratory chain, using ubiquinone as an electron acceptor. Essential for the catalytic activity of complex I. In Notiomys edwardsii (Edwards's long-clawed mouse), this protein is NADH-ubiquinone oxidoreductase chain 3.